A 1055-amino-acid chain; its full sequence is Elongation factor 3 (1055 aa).

ADP is bound at residue Val45. 7 HEAT repeats span residues Phe48–Ala86, Ser96–Pro133, Trp134–Phe172, Glu176–Asn213, Lys218–Ile255, Leu257–Ser290, and Pro296–Glu337. 2 ABC transporter domains span residues Cys447–Gln659 and Leu687–Ala1004. ADP contacts are provided by Asn723, Glu933, Asn936, and His962. Residues Glu1024 to Leu1055 form a disordered region. The span at Arg1033–Lys1044 shows a compositional bias: basic residues.

It belongs to the ABC transporter superfamily. ABCF family. EF3 subfamily. Interacts with CCH1; the interaction is direct and required for the localization of CCH1 to the cell membrane.

Its subcellular location is the cytoplasm. The protein localises to the cytosol. The enzyme catalyses ATP + H2O = ADP + phosphate + H(+). It functions in the pathway protein biosynthesis; polypeptide chain elongation. Ribosome-dependent ATPase that functions in cytoplasmic translation elongation. Required for the ATP-dependent release of deacylated tRNA from the ribosomal E-site during protein biosynthesis. Stimulates the eEF1A-dependent binding of aminoacyl-tRNA to the ribosomal A-site, which has reduced affinity for tRNA as long as the E-site is occupied. Assists translation termination by stimulating the release of nascent protein from the ribosome by release factors. Appears to localize calcium-channel protein CCH1 to the plasma membrane. In Cryptococcus neoformans var. grubii serotype A (strain H99 / ATCC 208821 / CBS 10515 / FGSC 9487) (Filobasidiella neoformans var. grubii), this protein is Elongation factor 3.